We begin with the raw amino-acid sequence, 314 residues long: Malate dehydrogenase (314 aa).

NAD(+) is bound by residues G11–G16 and D35. R84 and R90 together coordinate substrate. NAD(+) is bound by residues N97 and I120–N122. Positions 122 and 153 each coordinate substrate. H177 serves as the catalytic Proton acceptor.

This sequence belongs to the LDH/MDH superfamily. MDH type 3 family.

It catalyses the reaction (S)-malate + NAD(+) = oxaloacetate + NADH + H(+). In terms of biological role, catalyzes the reversible oxidation of malate to oxaloacetate. The chain is Malate dehydrogenase from Rickettsia rickettsii (strain Iowa).